A 158-amino-acid chain; its full sequence is Secreted RxLR effector protein 2 (158 aa).

The signal sequence occupies residues 1-21 (MRLLLWVLLVTLVTFLSSGDA). The RxLR-dEER signature appears at 54-75 (RFLRGDRSNIVNLKDGDENEER).

Belongs to the RxLR effector family.

The protein resides in the secreted. Its subcellular location is the host cell. Functionally, secreted effector that completely suppresses elicitor-induced cell death in host and enhances virulence of P.parasitica. The protein is Secreted RxLR effector protein 2 of Phytophthora nicotianae (Potato buckeye rot agent).